A 482-amino-acid polypeptide reads, in one-letter code: MTVRVRIAPSPTGPIHVGNVHTALFNWLFARHHGGKFILRFEDTDLERSRPEWEQVIFEDLKWLGIDWDEGPDIGGPYGPYRQTERLDLYRKYAQQLLESGHVYKCYCTKEEEDADRREAQAAGRPYQYKGRCRDLTPEQQAAFEAEGRKPVLRFRVPRGEVIRFNDLVRGPIEVPTDSIGDFIIMRANGMPLYNFAVVVDDVTMNITHVLRGEGHIPNTPVQILIYQALGFPVPEFGHLGHMTNPERGKLSKRKGEAAIRDYREQGYLPEAMLNFMSLLGWTPPGAESGREFLTKEELIREFDLSRVTKASSVFDRNKLNWMNGVYIRKKSLEEFAELALPFVVSAGLCTEEQARARWDWFKEVMAQVHERVETLAEIPQHVDIFLKDEIEMDEKAARKFLTEAVKPFFQRVSEGLRSVEWSVPAIEQLVRSIQEEMGLTPKESFQPIRVAITGRTASPGLFETIYLIGRERVLERMAPYC.

The 'HIGH' region motif lies at 9-19; sequence PSPTGPIHVGN. Zn(2+)-binding residues include C106, C108, C133, and D135. Positions 250–254 match the 'KMSKS' region motif; sequence KLSKR. ATP is bound at residue K253.

The protein belongs to the class-I aminoacyl-tRNA synthetase family. Glutamate--tRNA ligase type 1 subfamily. Monomer. Zn(2+) is required as a cofactor.

Its subcellular location is the cytoplasm. It catalyses the reaction tRNA(Glu) + L-glutamate + ATP = L-glutamyl-tRNA(Glu) + AMP + diphosphate. Functionally, catalyzes the attachment of glutamate to tRNA(Glu) in a two-step reaction: glutamate is first activated by ATP to form Glu-AMP and then transferred to the acceptor end of tRNA(Glu). This is Glutamate--tRNA ligase from Symbiobacterium thermophilum (strain DSM 24528 / JCM 14929 / IAM 14863 / T).